Here is an 84-residue protein sequence, read N- to C-terminus: Putative antitoxin RelB4 (84 aa).

Its function is as follows. Antitoxin component of a type II toxin-antitoxin (TA) system. Its cognate toxin is RelE4 (Potential). The polypeptide is Putative antitoxin RelB4 (relB4) (Methanocaldococcus jannaschii (strain ATCC 43067 / DSM 2661 / JAL-1 / JCM 10045 / NBRC 100440) (Methanococcus jannaschii)).